The sequence spans 291 residues: 4-hydroxybenzoate octaprenyltransferase (291 aa).

8 helical membrane passes run 23–43 (PIGT…AADG), 47–67 (PALV…GCAI), 98–118 (LAVA…LNAL), 139–159 (FFAI…PMAY), 171–191 (WLML…YAMV), 216–236 (IMLC…ALAL), 238–258 (AAYW…YTLL), and 267–287 (FFVF…AALA).

It belongs to the UbiA prenyltransferase family. Mg(2+) is required as a cofactor.

The protein resides in the cell inner membrane. The catalysed reaction is all-trans-octaprenyl diphosphate + 4-hydroxybenzoate = 4-hydroxy-3-(all-trans-octaprenyl)benzoate + diphosphate. It functions in the pathway cofactor biosynthesis; ubiquinone biosynthesis. Its function is as follows. Catalyzes the prenylation of para-hydroxybenzoate (PHB) with an all-trans polyprenyl group. Mediates the second step in the final reaction sequence of ubiquinone-8 (UQ-8) biosynthesis, which is the condensation of the polyisoprenoid side chain with PHB, generating the first membrane-bound Q intermediate 3-octaprenyl-4-hydroxybenzoate. The chain is 4-hydroxybenzoate octaprenyltransferase from Ralstonia nicotianae (strain ATCC BAA-1114 / GMI1000) (Ralstonia solanacearum).